A 157-amino-acid polypeptide reads, in one-letter code: 3-hydroxyacyl-[acyl-carrier-protein] dehydratase FabZ (157 aa).

His-58 is a catalytic residue.

The protein belongs to the thioester dehydratase family. FabZ subfamily.

Its subcellular location is the cytoplasm. The catalysed reaction is a (3R)-hydroxyacyl-[ACP] = a (2E)-enoyl-[ACP] + H2O. Functionally, involved in unsaturated fatty acids biosynthesis. Catalyzes the dehydration of short chain beta-hydroxyacyl-ACPs and long chain saturated and unsaturated beta-hydroxyacyl-ACPs. In Brucella melitensis biotype 2 (strain ATCC 23457), this protein is 3-hydroxyacyl-[acyl-carrier-protein] dehydratase FabZ.